A 161-amino-acid chain; its full sequence is Zinc finger protein KNUCKLES (161 aa).

The interval 1–33 is disordered; it reads MAEPPPSYLHFVGPAKTRSSSKRHSFSSSAHPA. The C2H2-type zinc-finger motif lies at 38–60; sequence FPCQYCPRKFYTSQALGGHQNAH. The tract at residues 142 to 161 is disordered; it reads GGNGVMEEDEPLDLDLSLRL. The EAR-like (transcriptional repression) motif lies at 155-159; it reads LDLSL.

First expressed in developing carpel primordia, and later in stamens and ovules of flower buds.

It is found in the nucleus. Its function is as follows. May function as a transcriptional repressor of cellular proliferation that regulates floral determinacy and relative size of basal pattern elements along the proximo-distal axis of the developing gynoecium. The chain is Zinc finger protein KNUCKLES (KNU) from Arabidopsis thaliana (Mouse-ear cress).